We begin with the raw amino-acid sequence, 3660 residues long: Dystrophin (3660 aa).

The segment at 1 to 244 is actin-binding; sequence MSAHVLWYEE…YVTSLFQVLP (244 aa). Calponin-homology (CH) domains follow at residues 19–123 and 138–244; these read DVQK…LHWQ and TNSE…QVLP. Spectrin repeat units lie at residues 341 to 449, 450 to 558, 561 to 669, 721 to 830, 832 to 936, 945 to 1047, 1050 to 1156, 1159 to 1265, 1268 to 1369, 1470 to 1570, 1573 to 1678, 1681 to 1782, 1879 to 1981, 2013 to 2103, 2106 to 2211, 2214 to 2321, 2472 to 2574, 2577 to 2683, 2686 to 2799, 2802 to 2904, 2906 to 2928, and 2931 to 3037; these read MDLD…NLHK, ILMD…LLQD, RKWQ…QVSQ, EIRK…WLEY, NSII…QLQT, RYKD…KLED, TKLQ…ALKG, DKTV…TLEE, ACWH…SLEQ, EQRL…ELEK, KLSR…LLME, KHME…FIPL, HQWY…TVLE, LSEV…RFDK, EKWR…RIEE, NILS…EIEI, FNKA…QLHE, KDST…ALES, LMLQ…HLEA, DQWK…LRRQ, DDVR…KIDD, and ERLQ…QLHE. The WW domain maps to 3052–3085; the sequence is TSVQGPWERAISPNKVPYYINHETQTTCWDHPKM. The segment at 3305–3361 adopts a ZZ-type; degenerate zinc-finger fold; it reads KHQAKCNICKECPIIGFRYRSLKHFNYDICQSCFFSGRVAKGHKMHYPMVEYCTPTT. Cys-3310, Cys-3313, Cys-3334, and Cys-3337 together coordinate Zn(2+). 2 disordered regions span residues 3503-3526 and 3575-3660; these read KQQH…VSPQ and PQAD…EATM. Polar residues-rich tracts occupy residues 3582-3601 and 3637-3647; these read NGTT…SSQP and QLNNSFPSSRG.

The protein resides in the cell membrane. Its subcellular location is the sarcolemma. It is found in the cytoplasm. The protein localises to the cytoskeleton. It localises to the postsynaptic cell membrane. In terms of biological role, may play a role in anchoring the cytoskeleton to the plasma membrane. The chain is Dystrophin (DMD) from Gallus gallus (Chicken).